The following is a 235-amino-acid chain: Large ribosomal subunit protein uL4 (235 aa).

The interval 45–75 (RAGTASTKTRGEVSGGGRKPWPQKHTGRARH) is disordered. The span at 65–75 (WPQKHTGRARH) shows a compositional bias: basic residues.

Belongs to the universal ribosomal protein uL4 family. Part of the 50S ribosomal subunit.

Its function is as follows. One of the primary rRNA binding proteins, this protein initially binds near the 5'-end of the 23S rRNA. It is important during the early stages of 50S assembly. It makes multiple contacts with different domains of the 23S rRNA in the assembled 50S subunit and ribosome. Functionally, this protein only weakly controls expression of the E.coli S10 operon. It is incorporated into E.coli ribosomes, however it is not as firmly associated as the endogenous protein. In terms of biological role, forms part of the polypeptide exit tunnel. In Thermotoga maritima (strain ATCC 43589 / DSM 3109 / JCM 10099 / NBRC 100826 / MSB8), this protein is Large ribosomal subunit protein uL4 (rplD).